A 136-amino-acid chain; its full sequence is Phosphoribosyl-AMP cyclohydrolase (136 aa).

Residue Asp-89 coordinates Mg(2+). Cys-90 contributes to the Zn(2+) binding site. Asp-91 and Asp-93 together coordinate Mg(2+). Residues Cys-106 and Cys-113 each contribute to the Zn(2+) site.

This sequence belongs to the PRA-CH family. Homodimer. The cofactor is Mg(2+). Zn(2+) serves as cofactor.

The protein resides in the cytoplasm. It catalyses the reaction 1-(5-phospho-beta-D-ribosyl)-5'-AMP + H2O = 1-(5-phospho-beta-D-ribosyl)-5-[(5-phospho-beta-D-ribosylamino)methylideneamino]imidazole-4-carboxamide. Its pathway is amino-acid biosynthesis; L-histidine biosynthesis; L-histidine from 5-phospho-alpha-D-ribose 1-diphosphate: step 3/9. Catalyzes the hydrolysis of the adenine ring of phosphoribosyl-AMP. This chain is Phosphoribosyl-AMP cyclohydrolase, found in Bifidobacterium longum subsp. infantis (strain ATCC 15697 / DSM 20088 / JCM 1222 / NCTC 11817 / S12).